A 403-amino-acid chain; its full sequence is Aspartate aminotransferase, cytoplasmic isozyme 2 (403 aa).

Position 1 is an N-acetylmethionine (Met-1). 3 residues coordinate L-aspartate: Gly-37, Trp-132, and Asn-185. Lys-249 is modified (N6-(pyridoxal phosphate)lysine). Arg-377 is a binding site for L-aspartate.

The protein belongs to the class-I pyridoxal-phosphate-dependent aminotransferase family. In terms of assembly, homodimer. Requires pyridoxal 5'-phosphate as cofactor.

It is found in the cytoplasm. The catalysed reaction is L-aspartate + 2-oxoglutarate = oxaloacetate + L-glutamate. Its function is as follows. Important for the metabolism of amino acids and Krebs-cycle related organic acids. In plants, it is involved in nitrogen metabolism and in aspects of carbon and energy metabolism. In Arabidopsis thaliana (Mouse-ear cress), this protein is Aspartate aminotransferase, cytoplasmic isozyme 2 (ASP4).